Consider the following 377-residue polypeptide: Caspase-4 (377 aa).

Positions 1-59 (MAEDKHNKNPLKMLESLGKELISGLLDDFVEKNVLKLEEEEKKKIYDAKLQDKARVLVD) are required for LPS-binding. Positions 1-80 (MAEDKHNKNP…VFVQTFLNID (80 aa)) are excised as a propeptide. The 91-residue stretch at 1–91 (MAEDKHNKNP…NSTSIKAPEE (91 aa)) folds into the CARD domain. A Phosphoserine modification is found at Ser83. Active-site residues include His210 and Cys258. The propeptide occupies 271–289 (SPPALADSFSQSSENLEED).

The protein belongs to the peptidase C14A family. In terms of assembly, heterotetramer that consists of two anti-parallel arranged heterodimers, each one formed by a 20 kDa (Caspase-4 subunit p20) and a 10 kDa (Caspase-4 subunit p10) subunit. Upon direct LPS-binding, forms large homooligomers, resulting in its activation. These oligomers are often referred to as 'non-canonical inflammasomes'. In its precursor form, interacts with TMEM214; this interaction is required for association with the endoplasmic reticulum membrane. Interacts with CASP1. Interacts with NOD2. Interacts with Serpinb1a, Serpinb1b and Serpinb1c; these interactions regulate CASP4 activity. As to quaternary structure, heterotetramer that consists of two anti-parallel arranged heterodimers, each one formed by a 20 kDa (Caspase-4 subunit p20) and a 10 kDa (Caspase-4 subunit p10) subunit. In response to activation signals, undergoes autoproteolytic cleavage and activation.

The protein localises to the cytoplasm. It localises to the cytosol. Its subcellular location is the endoplasmic reticulum membrane. The protein resides in the mitochondrion. It is found in the inflammasome. The protein localises to the secreted. It carries out the reaction Strict requirement for Asp at the P1 position. It has a preferred cleavage sequence of Tyr-Val-Ala-Asp-|- but also cleaves at Asp-Glu-Val-Asp-|-.. With respect to regulation, activated by homooligomerization induced by direct binding to cytosolic LPS, in a TLR4-independent manner. In addition to LPS, CASP4/CASP11 may also be activated by oxidized phospholipid 1-palmitoyl-2-arachidonoyl- sn-glycero-3-phosphorylcholine, an oxidized phospholipid (oxPAPC), in dendritic cells, promoting adaptive immunity. The role of oxPAPC is however unclear and another report suggests that oxPAPC competes with LPS-binding and inhibits the non-canonical inflammasome in macrophages. In terms of biological role, inflammatory caspase that acts as the effector of the non-canonical inflammasome by mediating lipopolysaccharide (LPS)-induced pyroptosis. Also indirectly activates the NLRP3 and NLRP6 inflammasomes. Acts as a thiol protease that cleaves a tetrapeptide after an Asp residue at position P1: catalyzes cleavage of CGAS, GSDMD and IL18. Effector of the non-canonical inflammasome independently of NLRP3 inflammasome and CASP1: the non-canonical inflammasome promotes pyroptosis through GSDMD cleavage without involving secretion of cytokine IL1B. In the non-canonical inflammasome, CASP4 is activated by direct binding to the lipid A moiety of LPS without the need of an upstream sensor. LPS-binding promotes CASP4 activation and CASP4-mediated cleavage of GSDMD and IL18, followed by IL18 secretion through the GSDMD pore, pyroptosis of infected cells and their extrusion into the gut lumen. Also indirectly promotes secretion of mature cytokines (IL1A and HMGB1) downstream of GSDMD-mediated pyroptosis via activation of the NLRP3 and NLRP6 inflammasomes. Involved in NLRP3-dependent CASP1 activation and IL1B secretion in response to non-canonical activators, such as UVB radiation or cholera enterotoxin. Involved in NLRP6 inflammasome-dependent activation in response to lipoteichoic acid (LTA), a cell-wall component of Gram-positive bacteria, which leads to CASP1 activation and IL1B secretion. Involved in LPS-induced IL6 secretion; this activity may not require caspase enzymatic activity. The non-canonical inflammasome is required for innate immunity to cytosolic, but not vacuolar, bacteria. Plays a crucial role in the restriction of S.typhimurium replication in colonic epithelial cells during infection. Pyroptosis limits bacterial replication, while cytokine secretion promotes the recruitment and activation of immune cells and triggers mucosal inflammation. May also act as an activator of adaptive immunity in dendritic cells, following activation by oxidized phospholipid 1-palmitoyl-2-arachidonoyl- sn-glycero-3-phosphorylcholine, an oxidized phospholipid (oxPAPC). Cleavage of GSDMD is not strictly dependent on the consensus cleavage site but depends on an exosite interface on CASP4 that recognizes and binds the Gasdermin-D, C-terminal (GSDMD-CT) part. Catalyzes cleavage and maturation of IL18; IL18 processing also depends of the exosite interface on CASP4. In contrast, it does not directly process IL1B. During non-canonical inflammasome activation, cuts CGAS and may play a role in the regulation of antiviral innate immune activation. The polypeptide is Caspase-4 (CASP4) (Bos taurus (Bovine)).